Reading from the N-terminus, the 482-residue chain is MSASVAVVSGFLRIPSIQKSQNPSFLFSRPKKSLVRPISASSSELPENVRNFWKWLRDQGVVSGKSVAEPAVVPEGLGLVARRDIGRNEVVLEIPKRLWINPETVTASKIGPLCGGLKPWVSVALFLIREKYEEESSWRVYLDMLPQSTDSTVFWSEEELAELKGTQLLSTTLGVKEYVENEFLKLEQEILLPNKDLFSSRITLDDFIWAFGILKSRAFSRLRGQNLVLIPLADLINHNPAIKTEDYAYEIKGAGLFSRDLLFSLKSPVYVKAGEQVYIQYDLNKSNAELALDYGFVESNPKRNSYTLTIEIPESDPFFGDKLDIAESNKMGETGYFDIVDGQTLPAGMLQYLRLVALGGPDAFLLESIFNNTIWGHLELPVSRTNEELICRVVRDACKSALSGFDTTIEEDEKLLDKGKLEPRLEMALKIRIGEKRVLQQIDQIFKDRELELDILEYYQERRLKDLGLVGEQGDIIFWETK.

The transit peptide at 1-57 (MSASVAVVSGFLRIPSIQKSQNPSFLFSRPKKSLVRPISASSSELPENVRNFWKWLR) directs the protein to the chloroplast. The region spanning 59–282 (QGVVSGKSVA…AGEQVYIQYD (224 aa)) is the SET domain. S-adenosyl-L-methionine is bound by residues 75-77 (EGL) and Arg-217. Substrate is bound by residues Arg-217, Arg-221, and Asp-234. Position 237–238 (237–238 (NH)) interacts with S-adenosyl-L-methionine. The substrate site is built by Tyr-249, Tyr-281, and Tyr-294.

It belongs to the class V-like SAM-binding methyltransferase superfamily. Plant protein-lysine LSMT methyltransferase family.

Its subcellular location is the plastid. It is found in the chloroplast stroma. It carries out the reaction [fructose-bisphosphate aldolase]-L-lysine + 3 S-adenosyl-L-methionine = [fructose-bisphosphate aldolase]-N(6),N(6),N(6)-trimethyl-L-lysine + 3 S-adenosyl-L-homocysteine + 3 H(+). Its function is as follows. Protein-lysine methyltransferase methylating chloroplastic fructose 1,6-bisphosphate aldolases. Can also use with low efficiency gamma-tocopherol methyltransferase as substrate, but not a cytosolic aldolase. Able to interact with unmethylated Rubisco, but unlike in pea, the complex is catalytically unproductive. This Arabidopsis thaliana (Mouse-ear cress) protein is [Fructose-bisphosphate aldolase]-lysine N-methyltransferase, chloroplastic (LSMT-L).